The following is a 465-amino-acid chain: Ribulose bisphosphate carboxylase large chain (465 aa).

Lysine 4 carries the post-translational modification N6,N6,N6-trimethyllysine. Substrate contacts are provided by asparagine 113 and threonine 163. Lysine 165 acts as the Proton acceptor in catalysis. Lysine 167 lines the substrate pocket. Residues lysine 191, aspartate 193, and glutamate 194 each coordinate Mg(2+). Residue lysine 191 is modified to N6-carboxylysine. Catalysis depends on histidine 284, which acts as the Proton acceptor. Substrate contacts are provided by arginine 285, histidine 317, and serine 369.

It belongs to the RuBisCO large chain family. Type I subfamily. As to quaternary structure, heterohexadecamer of 8 large chains and 8 small chains; disulfide-linked. The disulfide link is formed within the large subunit homodimers. Mg(2+) is required as a cofactor. Post-translationally, the disulfide bond which can form in the large chain dimeric partners within the hexadecamer appears to be associated with oxidative stress and protein turnover.

The protein resides in the plastid. Its subcellular location is the chloroplast. It catalyses the reaction 2 (2R)-3-phosphoglycerate + 2 H(+) = D-ribulose 1,5-bisphosphate + CO2 + H2O. The enzyme catalyses D-ribulose 1,5-bisphosphate + O2 = 2-phosphoglycolate + (2R)-3-phosphoglycerate + 2 H(+). Functionally, ruBisCO catalyzes two reactions: the carboxylation of D-ribulose 1,5-bisphosphate, the primary event in carbon dioxide fixation, as well as the oxidative fragmentation of the pentose substrate in the photorespiration process. Both reactions occur simultaneously and in competition at the same active site. This Cornus florida (Flowering dogwood) protein is Ribulose bisphosphate carboxylase large chain.